We begin with the raw amino-acid sequence, 142 residues long: MAPGRRVERVAALIRRETSELLIHGIRDERVHQGMVSITNVEVSGDLQHCKIFVSIYGEEIQRSEVLEGLEAASGFLRGELGRRLQMRRAPEVHFHLDRGIEKGTSVLNLLEQLEQQRETLGEVQSESDQPTTDETTTVNKT.

Residues 119–142 (ETLGEVQSESDQPTTDETTTVNKT) form a disordered region. Polar residues predominate over residues 123 to 142 (EVQSESDQPTTDETTTVNKT).

Belongs to the RbfA family. Monomer. Binds 30S ribosomal subunits, but not 50S ribosomal subunits or 70S ribosomes.

The protein localises to the cytoplasm. In terms of biological role, one of several proteins that assist in the late maturation steps of the functional core of the 30S ribosomal subunit. Associates with free 30S ribosomal subunits (but not with 30S subunits that are part of 70S ribosomes or polysomes). Required for efficient processing of 16S rRNA. May interact with the 5'-terminal helix region of 16S rRNA. The protein is Ribosome-binding factor A of Prochlorococcus marinus (strain MIT 9303).